A 150-amino-acid polypeptide reads, in one-letter code: Large ribosomal subunit protein bL9 (150 aa).

The protein belongs to the bacterial ribosomal protein bL9 family.

Its function is as follows. Binds to the 23S rRNA. The polypeptide is Large ribosomal subunit protein bL9 (Sodalis glossinidius (strain morsitans)).